A 638-amino-acid polypeptide reads, in one-letter code: Pentatricopeptide repeat-containing protein At1g59720, chloroplastic/mitochondrial (638 aa).

The N-terminal 40 residues, methionine 1–serine 40, are a transit peptide targeting the chloroplast and mitochondrion. 10 PPR repeats span residues threonine 82–histidine 112, serine 113–serine 148, aspartate 150–glycine 184, aspartate 185–arginine 215, serine 216–serine 246, aspartate 250–lysine 280, aspartate 288–arginine 318, aspartate 319–valine 353, asparagine 356–glutamate 390, and alanine 392–lysine 422. Positions isoleucine 427 to asparagine 510 are type E motif. The tract at residues glycine 511–arginine 541 is type E(+) motif. The segment at serine 542 to tryptophan 638 is type DYW motif.

The protein belongs to the PPR family. PCMP-H subfamily. Interacts with ORRM1. Interacts with VAR3/OZ1.

It localises to the plastid. Its subcellular location is the chloroplast. The protein localises to the mitochondrion. Its function is as follows. Involved in multiple sites RNA editing events in chloroplasts. Involved in the editing of the site 2 of ndhB (ndhB-2) and site 3 of ndhD (ndhD-3) transcripts, which are two plastid-encoded subunits of the chloroplast NAD(P)H dehydrogenase (NDH) complex. Required for the activity of the NDH complex of the photosynthetic electron transport chain. The sequence is that of Pentatricopeptide repeat-containing protein At1g59720, chloroplastic/mitochondrial (PCMP-H51) from Arabidopsis thaliana (Mouse-ear cress).